The primary structure comprises 499 residues: Lysine--tRNA ligase (499 aa).

Mg(2+)-binding residues include Glu403 and Glu410.

The protein belongs to the class-II aminoacyl-tRNA synthetase family. Homodimer. Mg(2+) serves as cofactor.

Its subcellular location is the cytoplasm. It carries out the reaction tRNA(Lys) + L-lysine + ATP = L-lysyl-tRNA(Lys) + AMP + diphosphate. This Campylobacter hominis (strain ATCC BAA-381 / DSM 21671 / CCUG 45161 / LMG 19568 / NCTC 13146 / CH001A) protein is Lysine--tRNA ligase.